Consider the following 325-residue polypeptide: Tetraacyldisaccharide 4'-kinase (325 aa).

An ATP-binding site is contributed by 54–61 (SVGGTGKT).

Belongs to the LpxK family.

The enzyme catalyses a lipid A disaccharide + ATP = a lipid IVA + ADP + H(+). It participates in glycolipid biosynthesis; lipid IV(A) biosynthesis; lipid IV(A) from (3R)-3-hydroxytetradecanoyl-[acyl-carrier-protein] and UDP-N-acetyl-alpha-D-glucosamine: step 6/6. Functionally, transfers the gamma-phosphate of ATP to the 4'-position of a tetraacyldisaccharide 1-phosphate intermediate (termed DS-1-P) to form tetraacyldisaccharide 1,4'-bis-phosphate (lipid IVA). The polypeptide is Tetraacyldisaccharide 4'-kinase (Rickettsia felis (strain ATCC VR-1525 / URRWXCal2) (Rickettsia azadi)).